We begin with the raw amino-acid sequence, 104 residues long: Putative zinc finger protein ORF104b (104 aa).

The C2H2-type zinc-finger motif lies at 62 to 85 (YECKYCHTRYLSHTGIVYHLEREH).

In Acidianus sp. F28 (AFV-2), this protein is Putative zinc finger protein ORF104b.